A 358-amino-acid polypeptide reads, in one-letter code: Chorismate synthase (358 aa).

NADP(+) is bound at residue R48. Residues 125–127, S277, 292–296, and R318 each bind FMN; these read RAS and KPIPS.

Belongs to the chorismate synthase family. In terms of assembly, homotetramer. The cofactor is FMNH2.

The enzyme catalyses 5-O-(1-carboxyvinyl)-3-phosphoshikimate = chorismate + phosphate. It functions in the pathway metabolic intermediate biosynthesis; chorismate biosynthesis; chorismate from D-erythrose 4-phosphate and phosphoenolpyruvate: step 7/7. Its function is as follows. Catalyzes the anti-1,4-elimination of the C-3 phosphate and the C-6 proR hydrogen from 5-enolpyruvylshikimate-3-phosphate (EPSP) to yield chorismate, which is the branch point compound that serves as the starting substrate for the three terminal pathways of aromatic amino acid biosynthesis. This reaction introduces a second double bond into the aromatic ring system. This Desulfatibacillum aliphaticivorans protein is Chorismate synthase.